Reading from the N-terminus, the 529-residue chain is Protein PAT1 homolog 2 (529 aa).

Residues 153-183 (QILQQQQRWRRRRSPTARSVPAQKPWSREPA) form a disordered region.

The protein belongs to the PAT1 family. In terms of assembly, interacts with LSM1.

It is found in the cytoplasm. The protein localises to the nucleus. RNA-binding protein that acts as a translational repressor. The chain is Protein PAT1 homolog 2 (Patl2) from Mus musculus (Mouse).